We begin with the raw amino-acid sequence, 189 residues long: Chitin synthase 1 (189 aa).

Belongs to the chitin synthase family.

The protein resides in the cell membrane. The catalysed reaction is [(1-&gt;4)-N-acetyl-beta-D-glucosaminyl](n) + UDP-N-acetyl-alpha-D-glucosamine = [(1-&gt;4)-N-acetyl-beta-D-glucosaminyl](n+1) + UDP + H(+). Its function is as follows. Polymerizes chitin, a structural polymer of the cell wall and septum, by transferring the sugar moiety of UDP-GlcNAc to the non-reducing end of the growing chitin polymer. In Schizophyllum commune (Split gill fungus), this protein is Chitin synthase 1 (CHS1).